Reading from the N-terminus, the 213-residue chain is Ras-like protein rasX (213 aa).

16-23 (GDGGVGKT) lines the GTP pocket. The Effector region signature appears at 38 to 46 (YDPTIEDSY). Residues 63-67 (DTAGQ) and 122-125 (NKSD) contribute to the GTP site. Cysteine methyl ester is present on cysteine 210. The S-geranylgeranyl cysteine moiety is linked to residue cysteine 210. The propeptide at 211 to 213 (KMM) is removed in mature form.

This sequence belongs to the small GTPase superfamily. Ras family.

It localises to the cell membrane. It catalyses the reaction GTP + H2O = GDP + phosphate + H(+). In terms of biological role, ras proteins bind GDP/GTP and possess intrinsic GTPase activity. This Dictyostelium discoideum (Social amoeba) protein is Ras-like protein rasX (rasX).